A 344-amino-acid polypeptide reads, in one-letter code: Small ribosomal subunit protein uS3 (344 aa).

Residues 38-106 enclose the KH type-2 domain; the sequence is LKAALRERLK…EVFIDIQEVH (69 aa). Residues 217–344 form a disordered region; sequence PEPEPRREQR…QKPEGSGENQ (128 aa). Basic and acidic residues-rich tracts occupy residues 219-259 and 335-344; these read PEPR…RGDR and QKPEGSGENQ.

This sequence belongs to the universal ribosomal protein uS3 family. As to quaternary structure, part of the 30S ribosomal subunit. Forms a tight complex with proteins S10 and S14.

Binds the lower part of the 30S subunit head. Binds mRNA in the 70S ribosome, positioning it for translation. The polypeptide is Small ribosomal subunit protein uS3 (Solibacter usitatus (strain Ellin6076)).